Here is a 197-residue protein sequence, read N- to C-terminus: Surfactant protein C (197 aa).

The propeptide occupies 1–23 (MDVGSKEVLMESPPDYSAAPRGR). S-palmitoyl cysteine attachment occurs at residues cysteine 28 and cysteine 29. The propeptide occupies 59–197 (HMSQKHTEMV…LCGEVPLYYI (139 aa)). Positions 94–197 (FSIGSTGLVV…LCGEVPLYYI (104 aa)) constitute a BRICHOS domain. Disulfide bonds link cysteine 120–cysteine 148 and cysteine 121–cysteine 189.

It is found in the secreted. Its subcellular location is the extracellular space. The protein localises to the surface film. In terms of biological role, pulmonary surfactant associated proteins promote alveolar stability by lowering the surface tension at the air-liquid interface in the peripheral air spaces. The protein is Surfactant protein C of Homo sapiens (Human).